A 147-amino-acid polypeptide reads, in one-letter code: Hemoglobin subunit epsilon (147 aa).

A Globin domain is found at His3–His147. Phosphoserine occurs at positions 14 and 51. 2 residues coordinate heme b: His64 and His93.

The protein belongs to the globin family. Heterotetramer of two alpha chains and two epsilon chains in early embryonic hemoglobin Gower-2; two zeta chains and two epsilon chains in early embryonic hemoglobin Gower-1. Red blood cells.

Its function is as follows. The epsilon chain is a beta-type chain of early mammalian embryonic hemoglobin. This is Hemoglobin subunit epsilon (HBE1) from Bradypus tridactylus (Pale-throated three-toed sloth).